A 370-amino-acid chain; its full sequence is tRNA-specific 2-thiouridylase MnmA (370 aa).

Residues 6 to 13 (AMSGGVDS) and leucine 32 contribute to the ATP site. The active-site Nucleophile is the cysteine 101. Cysteine 101 and cysteine 193 are joined by a disulfide. An ATP-binding site is contributed by glycine 125. The segment at 143-145 (KDQ) is interaction with tRNA. The active-site Cysteine persulfide intermediate is the cysteine 193.

Belongs to the MnmA/TRMU family.

The protein localises to the cytoplasm. The enzyme catalyses S-sulfanyl-L-cysteinyl-[protein] + uridine(34) in tRNA + AH2 + ATP = 2-thiouridine(34) in tRNA + L-cysteinyl-[protein] + A + AMP + diphosphate + H(+). Catalyzes the 2-thiolation of uridine at the wobble position (U34) of tRNA, leading to the formation of s(2)U34. In Rhodococcus erythropolis (strain PR4 / NBRC 100887), this protein is tRNA-specific 2-thiouridylase MnmA.